The primary structure comprises 177 residues: Isopentenyl-diphosphate Delta-isomerase (177 aa).

Positions 22 and 28 each coordinate Mn(2+). Residues 26–160 (LRHMAISVFV…PERFTPWLRI (135 aa)) enclose the Nudix hydrolase domain. The active site involves C62. A Mn(2+)-binding site is contributed by H64. E82 contributes to the Mg(2+) binding site. The Mn(2+) site is built by E108 and E110. The active site involves E110.

The protein belongs to the IPP isomerase type 1 family. Mg(2+) is required as a cofactor. The cofactor is Mn(2+).

It localises to the cytoplasm. The catalysed reaction is isopentenyl diphosphate = dimethylallyl diphosphate. The protein operates within isoprenoid biosynthesis; dimethylallyl diphosphate biosynthesis; dimethylallyl diphosphate from isopentenyl diphosphate: step 1/1. Its pathway is porphyrin-containing compound metabolism; chlorophyll biosynthesis. Functionally, catalyzes the 1,3-allylic rearrangement of the homoallylic substrate isopentenyl (IPP) to its highly electrophilic allylic isomer, dimethylallyl diphosphate (DMAPP). In Cereibacter sphaeroides (strain KD131 / KCTC 12085) (Rhodobacter sphaeroides), this protein is Isopentenyl-diphosphate Delta-isomerase.